A 129-amino-acid polypeptide reads, in one-letter code: uncharacterized protein (129 aa).

The segment covering 91 to 114 has biased composition (basic and acidic residues); it reads ASEKVGEMKEAASEKASEMKEAVS. Residues 91–129 form a disordered region; that stretch reads ASEKVGEMKEAASEKASEMKEAVSEKATQAVDAVKEATK.

The protein belongs to the LEA type 1 family.

This is an uncharacterized protein from Haemophilus influenzae (strain ATCC 51907 / DSM 11121 / KW20 / Rd).